The following is a 205-amino-acid chain: Guanylate kinase (205 aa).

The Guanylate kinase-like domain occupies 5-184 (GLLIVLSGPS…AVQKIKGIVE (180 aa)). 12-19 (GPSGVGKG) serves as a coordination point for ATP.

It belongs to the guanylate kinase family.

It localises to the cytoplasm. The catalysed reaction is GMP + ATP = GDP + ADP. Essential for recycling GMP and indirectly, cGMP. The chain is Guanylate kinase from Listeria monocytogenes serotype 4b (strain F2365).